Consider the following 252-residue polypeptide: 3-dehydroquinate dehydratase (252 aa).

Residues 46–48 (EWR) and R82 each bind 3-dehydroquinate. Residue H143 is the Proton donor/acceptor of the active site. The active-site Schiff-base intermediate with substrate is K170. The 3-dehydroquinate site is built by R212, S231, and Q235.

Belongs to the type-I 3-dehydroquinase family. As to quaternary structure, homodimer.

The catalysed reaction is 3-dehydroquinate = 3-dehydroshikimate + H2O. It participates in metabolic intermediate biosynthesis; chorismate biosynthesis; chorismate from D-erythrose 4-phosphate and phosphoenolpyruvate: step 3/7. Functionally, involved in the third step of the chorismate pathway, which leads to the biosynthesis of aromatic amino acids. Catalyzes the cis-dehydration of 3-dehydroquinate (DHQ) and introduces the first double bond of the aromatic ring to yield 3-dehydroshikimate. The protein is 3-dehydroquinate dehydratase of Listeria monocytogenes serovar 1/2a (strain ATCC BAA-679 / EGD-e).